A 284-amino-acid polypeptide reads, in one-letter code: MANEPQKSDDNGQAAEAVVTDDEIVLQDQQLKTIEDEQKSVPLVATLAPFSILCAEYDNETSAAFLSKATELSEVYGEIRYIRGDGNCFYRAILVGLIEIMLKDRARLEKFIASSRDWTRTLVELGFPDWTCTDFCDFFIEFLEKIHSGVHTEEAVYTILNDDGSANYILMFFRLITSAFLKQNSEEYAPFIDEGMTVAQYCEQEIEPMWKDADHLAINSLIKAAGTRVRIEYMDRTAAPNGGWHYDIPSDDQQIAPEITLLYRPGHYDVIYKKDSTEASEIEN.

Residues 77-274 (GEIRYIRGDG…PGHYDVIYKK (198 aa)) form the OTU domain. Residue aspartate 85 is part of the active site. The active-site Nucleophile is the cysteine 88. A substrate-binding site is contributed by isoleucine 176. Catalysis depends on residues histidine 245 and histidine 267.

This sequence belongs to the peptidase C65 family.

It catalyses the reaction Thiol-dependent hydrolysis of ester, thioester, amide, peptide and isopeptide bonds formed by the C-terminal Gly of ubiquitin (a 76-residue protein attached to proteins as an intracellular targeting signal).. Hydrolase that can remove conjugated ubiquitin from proteins and plays an important regulatory role at the level of protein turnover by preventing degradation. Specifically cleaves 'Lys-48'-linked polyubiquitin. This Caenorhabditis elegans protein is Ubiquitin thioesterase otubain-like (otub-1).